A 337-amino-acid chain; its full sequence is Glyceraldehyde-3-phosphate dehydrogenase (337 aa).

NAD(+) is bound by residues 12 to 13 (RI), aspartate 34, and lysine 79. D-glyceraldehyde 3-phosphate contacts are provided by residues 150-152 (SCT), threonine 181, 210-211 (TG), and arginine 233. The active-site Nucleophile is cysteine 151. Asparagine 315 is an NAD(+) binding site.

It belongs to the glyceraldehyde-3-phosphate dehydrogenase family. Homotetramer.

Its subcellular location is the cytoplasm. The catalysed reaction is D-glyceraldehyde 3-phosphate + phosphate + NAD(+) = (2R)-3-phospho-glyceroyl phosphate + NADH + H(+). Its pathway is carbohydrate degradation; glycolysis; pyruvate from D-glyceraldehyde 3-phosphate: step 1/5. In Phanerodontia chrysosporium (White-rot fungus), this protein is Glyceraldehyde-3-phosphate dehydrogenase (GPD).